The primary structure comprises 3357 residues: Versican core protein (3357 aa).

Positions 1–23 are cleaved as a signal peptide; it reads MLINMKGILWMCSTLLLTHALHQ. The Ig-like V-type domain occupies 24 to 146; sequence AKMETSPPVK…EDTQDTMSLA (123 aa). Intrachain disulfides connect C44/C130, C172/C243, C196/C217, C270/C333, and C294/C315. A glycan (N-linked (GlcNAc...) asparagine) is linked at N57. 2 Link domains span residues 150-245 and 251-347; these read VVFH…YCYV and DVFH…YCFK. N-linked (GlcNAc...) asparagine glycans are attached at residues N330, N351, and N441. Residues 348–1308 form a GAG-alpha (glucosaminoglycan attachment domain) region; that stretch reads PKQNISEATT…IIEVRENKTG (961 aa). The span at 625–634 shows a compositional bias: basic and acidic residues; sequence EPKTNGKVTE. Residues 625-646 are disordered; that stretch reads EPKTNGKVTEDEFGQSQPTTTF. S660 carries O-linked (Xyl...) (chondroitin sulfate) serine glycosylation. Disordered stretches follow at residues 801 to 863 and 881 to 908; these read WPGD…KPLE and TSTS…TTST. N-linked (GlcNAc...) asparagine glycosylation occurs at N807. Residues N914 and N951 are each glycosylated (N-linked (GlcNAc...) asparagine). Disordered stretches follow at residues 1010-1088 and 1252-1288; these read SPGA…YPPG and DHMT…PAAG. Composition is skewed to polar residues over residues 1017–1042 and 1275–1286; these read TGVS…SSTA and SKTQELSTSTPA. Residues N1305 and N1371 are each glycosylated (N-linked (GlcNAc...) asparagine). Residues 1309 to 3051 form a GAG-beta region; sequence RLSDMIVSGH…VEGTAVYLPG (1743 aa). Basic and acidic residues predominate over residues 1396–1406; sequence DPEAAEARRGQ. 2 disordered regions span residues 1396-1421 and 1458-1524; these read DPEA…DSSA and TYPE…AIEQ. Composition is skewed to polar residues over residues 1411 to 1421 and 1487 to 1498; these read APSQNFPDSSA and WSESITESSPNL. S1517 and S1599 each carry an O-linked (Xyl...) (chondroitin sulfate) serine glycan. The segment at 1664 to 1705 is disordered; sequence LPSPDARPTTVWNSNSTSEWVSDKSFEGRKKKENEDEEGAVN. Positions 1673-1683 are enriched in polar residues; it reads TVWNSNSTSEW. N1678 carries an N-linked (GlcNAc...) asparagine glycan. A compositionally biased stretch (basic and acidic residues) spans 1684-1697; sequence VSDKSFEGRKKKEN. O-linked (Xyl...) (chondroitin sulfate) serine glycans are attached at residues S1907 and S1931. The tract at residues 1926 to 1965 is disordered; that stretch reads VGMGGSDDERVRDTQTSSSIPTTSDNIYPVPDSKGPDSTV. The span at 1939–1951 shows a compositional bias: polar residues; that stretch reads TQTSSSIPTTSDN. N-linked (GlcNAc...) asparagine glycosylation is present at N2053. S2219 and S2226 each carry an O-linked (Xyl...) (chondroitin sulfate) serine glycan. N2243 carries N-linked (GlcNAc...) asparagine glycosylation. A compositionally biased stretch (polar residues) spans 2308 to 2322; the sequence is TLSHTGTEEPTTSTL. 2 disordered regions span residues 2308–2374 and 2475–2494; these read TLSH…ATSP and YPTS…EGIE. Residue N2361 is glycosylated (N-linked (GlcNAc...) asparagine). The segment covering 2475-2486 has biased composition (low complexity); the sequence is YPTSTLPSTEPY. Residues S2585 and S2586 each carry the phosphoserine modification. The N-linked (GlcNAc...) asparagine glycan is linked to N2626. 3 O-linked (Xyl...) (chondroitin sulfate) serine glycosylation sites follow: S2696, S2697, and S2741. Residues 2853 to 2908 are disordered; it reads LGGNVHRTEPPSMSRDPALDVSEDESKHKLLEELETSPTKPETSQDFPNKAKDHIP. A compositionally biased stretch (polar residues) spans 2888–2899; sequence TSPTKPETSQDF. N-linked (GlcNAc...) asparagine glycosylation is present at N3029. The region spanning 3051–3087 is the EGF-like 1 domain; it reads GPDLCKTNPCLNGGTCYPTETSYVCTCAPGYSGDQCE. Cystine bridges form between C3055-C3066, C3060-C3075, C3077-C3086, C3093-C3104, C3098-C3113, C3115-C3124, C3131-C3142, C3159-C3251, C3227-C3243, C3258-C3301, and C3287-C3314. Residues 3089-3125 form the EGF-like 2; calcium-binding domain; sequence DFDECHSNPCRNGATCVDGFNTFRCLCLPSYVGALCE. In terms of domain architecture, C-type lectin spans 3138–3252; that stretch reads FQGQCYKYFA…CNYHLTYTCK (115 aa). The Sushi domain maps to 3256–3316; sequence VACGQPPVVE…WAMPKITCMN (61 aa). N-linked (GlcNAc...) asparagine glycosylation is found at N3331 and N3341. A compositionally biased stretch (polar residues) spans 3331-3342; that stretch reads NSSSAKDNSINT. Residues 3331–3357 are disordered; sequence NSSSAKDNSINTSKHEHRWSRRQETRR.

Belongs to the aggrecan/versican proteoglycan family. As to quaternary structure, interacts with FBLN1. In terms of processing, phosphorylated by FAM20C in the extracellular medium. Proteolytically cleaved by ADAMTS5 and ADAMTS15 in the pericellular matrix surrounding myoblasts, facilitating myoblast contact and fusion which is required for skeletal muscle development and regeneration. As to expression, expressed in the retina (at protein level). Isoform V2: Only expressed in brain.

It is found in the secreted. Its subcellular location is the extracellular space. It localises to the extracellular matrix. The protein resides in the cell projection. The protein localises to the cilium. It is found in the photoreceptor outer segment. Its subcellular location is the interphotoreceptor matrix. May play a role in intercellular signaling and in connecting cells with the extracellular matrix. May take part in the regulation of cell motility, growth and differentiation. Binds hyaluronic acid. This Mus musculus (Mouse) protein is Versican core protein (Vcan).